The chain runs to 357 residues: Glutamate 5-kinase (357 aa).

Lys-7 is an ATP binding site. The substrate site is built by Ser-43, Asp-130, and Asn-142. Residues 162-163 and 205-211 contribute to the ATP site; these read TD and TGGMTTK. One can recognise a PUA domain in the interval 270-341; it reads EGELCLDQGA…QALSVVTDAE (72 aa).

The protein belongs to the glutamate 5-kinase family.

The protein localises to the cytoplasm. It carries out the reaction L-glutamate + ATP = L-glutamyl 5-phosphate + ADP. The protein operates within amino-acid biosynthesis; L-proline biosynthesis; L-glutamate 5-semialdehyde from L-glutamate: step 1/2. Its function is as follows. Catalyzes the transfer of a phosphate group to glutamate to form L-glutamate 5-phosphate. The polypeptide is Glutamate 5-kinase (Synechococcus sp. (strain CC9902)).